Reading from the N-terminus, the 214-residue chain is MIKEAIKIQGTKEGLVIVLEEDVDIETLKEKIVNRIEKSLKFFEGATLTVRVKSLSVKEEKLQELKDVIFEKYGIEVRIKNFQEKHIKNVTDDEIFNGLEEGITKFHKGTVRSGQVVKYHGNLVIIGDVNPGGLVQAAGNIVVMGTLRGIAHAGFTGNKEAVIVASSLRAMQLRIANVISRAPDKDDASDYPEIAVVKKGKIIVKPLYHLNDLW.

This sequence belongs to the MinC family. Interacts with MinD and FtsZ.

Cell division inhibitor that blocks the formation of polar Z ring septums. Rapidly oscillates between the poles of the cell to destabilize FtsZ filaments that have formed before they mature into polar Z rings. Prevents FtsZ polymerization. The polypeptide is Probable septum site-determining protein MinC (Thermoanaerobacter pseudethanolicus (strain ATCC 33223 / 39E) (Clostridium thermohydrosulfuricum)).